A 186-amino-acid polypeptide reads, in one-letter code: MGNQLGTLKKEEVELLQNSSHFDSRELRALYKQFRKDSPSGTINKQEFKEIMTQMGVGDQFLQDLLFNVFDKNKDSTINFQEFVCGLSSITRGTPEEKIEFAFSLYDIDGNGYITRSEMESILESMYKLVGTFVTCSGKKFDPHDLIEEFFDSMDDDGDGYISLEEYKRGTLKNPDIIQGLKLLNQ.

EF-hand domains follow at residues 40–58, 66–93, 94–129, and 142–177; these read SGTI…MGVG, LFNV…ITRG, TPEE…MYKL, and DPHD…NPDI. 10 residues coordinate Ca(2+): Asp107, Asp109, Asn111, Tyr113, Glu118, Asp155, Asp157, Asp159, Tyr161, and Glu166.

It belongs to the recoverin family.

Its function is as follows. May prevent cells from entering development prematurely in the presence of environmental nutrients. The polypeptide is Calcium-binding protein NCSA (ncsA) (Dictyostelium discoideum (Social amoeba)).